We begin with the raw amino-acid sequence, 805 residues long: Mitochondrial inner membrane m-AAA protease component AFG3L2 (805 aa).

The N-terminal 39 residues, 1 to 39, are a transit peptide targeting the mitochondrion; it reads MAHRCLLLWGRGACRPRGMPPMLLPGGRTGSTERLYLRM. Residues 40 to 67 constitute a propeptide, removed in mature form; the sequence is LYRYATTQAKTSRNSLLTDVIAAYQRLC. The segment at 74-127 is disordered; it reads FEKYFPNGKNGKKTSEPKEVMGEKKEPKPAAAPRPSGGGVGGGGKRGGKKDDSH. Over residues 86-101 the composition is skewed to basic and acidic residues; the sequence is KTSEPKEVMGEKKEPK. The segment covering 109-118 has biased composition (gly residues); sequence SGGGVGGGGK. An N6-succinyllysine modification is found at K118. A run of 2 helical transmembrane segments spans residues 144–164 and 252–272; these read FKMY…YFLF and GSFL…LYTI. Residues V311, A312, T353, G354, K355, T356, L357, and H491 each contribute to the ATP site. H575 is a Zn(2+) binding site. E576 is an active-site residue. Zn(2+) contacts are provided by H579 and D650. The interval 760 to 805 is disordered; sequence FVEGTGSLDEDTSLPEGLKDWNREREGSEEPSGEKVTSPVQGAGPA. The segment covering 776-787 has biased composition (basic and acidic residues); it reads GLKDWNREREGS.

The protein in the N-terminal section; belongs to the AAA ATPase family. It in the C-terminal section; belongs to the peptidase M41 family. As to quaternary structure, homohexamer. Forms heterohexamers with SPG7. The m-AAA protease is either composed of homohexamers of AFG3L2 or heterohexamers of AFG3L2 and SPG7. Interacts with MAIP1. Interacts with DNAJC19. Interacts with PHB2. It depends on Zn(2+) as a cofactor. In terms of processing, upon import into the mitochondrion, the N-terminal transit peptide is cleaved to generate an intermediate form which undergoes autocatalytic proteolytic processing to generate the proteolytically active mature form.

The protein localises to the mitochondrion inner membrane. It carries out the reaction ATP + H2O = ADP + phosphate + H(+). In terms of biological role, catalytic component of the m-AAA protease, a protease that plays a key role in proteostasis of inner mitochondrial membrane proteins, and which is essential for axonal and neuron development. AFG3L2 possesses both ATPase and protease activities: the ATPase activity is required to unfold substrates, threading them into the internal proteolytic cavity for hydrolysis into small peptide fragments. The m-AAA protease carries out protein quality control in the inner membrane of the mitochondria by mediating degradation of mistranslated or misfolded polypeptides. The m-AAA protease complex also promotes the processing and maturation of mitochondrial proteins, such as MRPL32/bL32m, PINK1 and SP7. Mediates protein maturation of the mitochondrial ribosomal subunit MRPL32/bL32m by catalyzing the cleavage of the presequence of MRPL32/bL32m prior to assembly into the mitochondrial ribosome. Required for SPG7 maturation into its active mature form after SPG7 cleavage by mitochondrial-processing peptidase (MPP). Required for the maturation of PINK1 into its 52kDa mature form after its cleavage by mitochondrial-processing peptidase (MPP). Acts as a regulator of calcium in neurons by mediating degradation of SMDT1/EMRE before its assembly with the uniporter complex, limiting the availability of SMDT1/EMRE for MCU assembly and promoting efficient assembly of gatekeeper subunits with MCU. Promotes the proteolytic degradation of GHITM upon hyperpolarization of mitochondria: progressive GHITM degradation leads to respiratory complex I degradation and broad reshaping of the mitochondrial proteome by AFG3L2. Also acts as a regulator of mitochondrial glutathione homeostasis by mediating cleavage and degradation of SLC25A39. SLC25A39 cleavage is prevented when SLC25A39 binds iron-sulfur. Involved in the regulation of OMA1-dependent processing of OPA1. May act by mediating processing of OMA1 precursor, participating in OMA1 maturation. In Bos taurus (Bovine), this protein is Mitochondrial inner membrane m-AAA protease component AFG3L2 (AFG3L2).